We begin with the raw amino-acid sequence, 303 residues long: Ribonuclease Z (303 aa).

Zn(2+) is bound by residues H61, H63, D65, H66, H139, D207, and H266. D65 (proton acceptor) is an active-site residue.

The protein belongs to the RNase Z family. Homodimer. Zn(2+) is required as a cofactor.

It catalyses the reaction Endonucleolytic cleavage of RNA, removing extra 3' nucleotides from tRNA precursor, generating 3' termini of tRNAs. A 3'-hydroxy group is left at the tRNA terminus and a 5'-phosphoryl group is left at the trailer molecule.. Functionally, zinc phosphodiesterase, which displays some tRNA 3'-processing endonuclease activity. Probably involved in tRNA maturation, by removing a 3'-trailer from precursor tRNA. This Clostridium kluyveri (strain ATCC 8527 / DSM 555 / NBRC 12016 / NCIMB 10680 / K1) protein is Ribonuclease Z.